The primary structure comprises 524 residues: Light-independent protochlorophyllide reductase subunit B (524 aa).

Aspartate 36 lines the [4Fe-4S] cluster pocket. Residue aspartate 290 is the Proton donor of the active site. 425 to 426 (GL) lines the substrate pocket.

It belongs to the ChlB/BchB/BchZ family. Protochlorophyllide reductase is composed of three subunits; ChlL, ChlN and ChlB. Forms a heterotetramer of two ChlB and two ChlN subunits. It depends on [4Fe-4S] cluster as a cofactor.

The catalysed reaction is chlorophyllide a + oxidized 2[4Fe-4S]-[ferredoxin] + 2 ADP + 2 phosphate = protochlorophyllide a + reduced 2[4Fe-4S]-[ferredoxin] + 2 ATP + 2 H2O. Its pathway is porphyrin-containing compound metabolism; chlorophyll biosynthesis (light-independent). Component of the dark-operative protochlorophyllide reductase (DPOR) that uses Mg-ATP and reduced ferredoxin to reduce ring D of protochlorophyllide (Pchlide) to form chlorophyllide a (Chlide). This reaction is light-independent. The NB-protein (ChlN-ChlB) is the catalytic component of the complex. This Synechococcus sp. (strain CC9605) protein is Light-independent protochlorophyllide reductase subunit B.